Here is a 146-residue protein sequence, read N- to C-terminus: Hemoglobin subunit beta (146 aa).

N-acetylvaline is present on Val-1. One can recognise a Globin domain in the interval 2 to 146 (HLTGEEKTAV…VANALAHKYH (145 aa)). Position 12 is a phosphothreonine (Thr-12). Residue Ser-44 is modified to Phosphoserine. Lys-59 carries the N6-acetyllysine modification. His-63 contributes to the heme b binding site. Position 82 is an N6-acetyllysine (Lys-82). His-92 is a heme b binding site. Cys-93 carries the S-nitrosocysteine modification. The residue at position 144 (Lys-144) is an N6-acetyllysine.

This sequence belongs to the globin family. Heterotetramer of two alpha chains and two beta chains. In terms of tissue distribution, red blood cells.

Functionally, involved in oxygen transport from the lung to the various peripheral tissues. The sequence is that of Hemoglobin subunit beta (HBB) from Nasua nasua (Ring-tailed coati).